The chain runs to 164 residues: Phosphopantetheine adenylyltransferase (164 aa).

Thr-10 contributes to the substrate binding site. ATP-binding positions include 10–11 and His-18; that span reads TF. Substrate contacts are provided by Lys-42, Leu-74, and Arg-88. Residues 89-91, Glu-99, and 124-130 each bind ATP; these read GIR and NSFISST.

Belongs to the bacterial CoaD family. Homohexamer. It depends on Mg(2+) as a cofactor.

It is found in the cytoplasm. It carries out the reaction (R)-4'-phosphopantetheine + ATP + H(+) = 3'-dephospho-CoA + diphosphate. It functions in the pathway cofactor biosynthesis; coenzyme A biosynthesis; CoA from (R)-pantothenate: step 4/5. Reversibly transfers an adenylyl group from ATP to 4'-phosphopantetheine, yielding dephospho-CoA (dPCoA) and pyrophosphate. This Pseudoalteromonas translucida (strain TAC 125) protein is Phosphopantetheine adenylyltransferase.